A 246-amino-acid polypeptide reads, in one-letter code: tRNA (guanine-N(7)-)-methyltransferase (246 aa).

Positions 1-26 are disordered; that stretch reads MIENPSPSAANLPEHPSTDASHPRNI. Residues E75, E100, D127, and D150 each coordinate S-adenosyl-L-methionine. The active site involves D150. K154 lines the substrate pocket. Positions 156-161 are interaction with RNA; the sequence is KHNKRR. Residues D186 and 225 to 228 contribute to the substrate site; that span reads TKFE.

It belongs to the class I-like SAM-binding methyltransferase superfamily. TrmB family.

The catalysed reaction is guanosine(46) in tRNA + S-adenosyl-L-methionine = N(7)-methylguanosine(46) in tRNA + S-adenosyl-L-homocysteine. Its pathway is tRNA modification; N(7)-methylguanine-tRNA biosynthesis. Catalyzes the formation of N(7)-methylguanine at position 46 (m7G46) in tRNA. This Polaromonas sp. (strain JS666 / ATCC BAA-500) protein is tRNA (guanine-N(7)-)-methyltransferase.